A 151-amino-acid chain; its full sequence is Large ribosomal subunit protein uL13 (151 aa).

It belongs to the universal ribosomal protein uL13 family. In terms of assembly, part of the 50S ribosomal subunit.

In terms of biological role, this protein is one of the early assembly proteins of the 50S ribosomal subunit, although it is not seen to bind rRNA by itself. It is important during the early stages of 50S assembly. The chain is Large ribosomal subunit protein uL13 from Synechococcus sp. (strain JA-3-3Ab) (Cyanobacteria bacterium Yellowstone A-Prime).